We begin with the raw amino-acid sequence, 363 residues long: Histidinol-phosphate aminotransferase (363 aa).

K220 carries the post-translational modification N6-(pyridoxal phosphate)lysine.

This sequence belongs to the class-II pyridoxal-phosphate-dependent aminotransferase family. Histidinol-phosphate aminotransferase subfamily. As to quaternary structure, homodimer. The cofactor is pyridoxal 5'-phosphate.

It carries out the reaction L-histidinol phosphate + 2-oxoglutarate = 3-(imidazol-4-yl)-2-oxopropyl phosphate + L-glutamate. Its pathway is amino-acid biosynthesis; L-histidine biosynthesis; L-histidine from 5-phospho-alpha-D-ribose 1-diphosphate: step 7/9. The chain is Histidinol-phosphate aminotransferase from Paramagnetospirillum magneticum (strain ATCC 700264 / AMB-1) (Magnetospirillum magneticum).